The primary structure comprises 222 residues: MSASVFIERRKIRPLRTEAACIPTHALCFNVLGIPYMDPGNGGIRPLNPDDSDATACVHGVAYLLTSDDLKKVILSEGGGIAYQVARLNAKLLLDDSPIVVDTLIGRHNVDASNERLPSARYIGVLTRGANELNLPLSYQRRLAEQPIYQPKSGWWFQLGVALFLWPWTRAAIITERLVYKHQGPDGHVPAWFLFIFDCLLWLMWAQHDYIHGPIFGRGDGR.

2 helical membrane passes run 154 to 174 and 187 to 207; these read GWWFQLGVALFLWPWTRAAII and GHVPAWFLFIFDCLLWLMWAQ.

This sequence belongs to the class-I pyridoxal-phosphate-dependent aminotransferase family.

The protein localises to the membrane. The enzyme catalyses an alpha-(gamma-L-glutamyl)-L-amino acid = 5-oxo-L-proline + an L-alpha-amino acid. The protein operates within secondary metabolite biosynthesis. Functionally, gamma-glutamyl cyclotransferase; part of the gene cluster that mediates the biosynthesis of an unusual class of epipolythiodioxopiperazines (ETPs) lacking the reactive thiol group important for toxicity. Firstly, L-tyrosine is prenylated by tcpD, before undergoing condensation with L-glycine in a reaction catalyzed by the NRPS tcpP leading to the diketopiperazine (DKP) backbone. Afterwards the alpha-carbon of tyrosine is oxidized by the cytochrome P450 tcpC to form a hydroxyl group. However, in contrast other ETP biosynthesis pathways studied so far, tcpC is not able to bishydroxylate the DKP at both alpha-carbon positions, but hydroxylates the alpha-carbon of the tyrosine part and the nitrogen of the glycine part. The next steps involve an alpha,beta-elimination reaction catalyzed by tcpI, a methylation by the methyltransferase tcpN the action of the four enzyme cascade tcpG/K/J/I. Due to a dysfunctional cytochrome P450 monooxygenase tcpC, the pathway leads to the biosynthesis of probable non-toxic metabolites lacking the reactive thiol group. This is Gamma-glutamyl cyclotransferase gliK from Claviceps purpurea (strain 20.1) (Ergot fungus).